The sequence spans 347 residues: Melanoma-associated antigen B10 (347 aa).

Basic residues predominate over residues 1 to 18 (MPRGQKSKLRAREKRRQA). 2 disordered regions span residues 1–20 (MPRG…QARG) and 56–92 (GASN…QMEE). A compositionally biased stretch (low complexity) spans 67–78 (AQSTSTSATAAS). Residues 81–92 (RHPEGVNDQMEE) are compositionally biased toward basic and acidic residues. The region spanning 111 to 310 (VDEKVIILVH…SEFSNWYTEA (200 aa)) is the MAGE domain. Positions 328–347 (VSATAGARSKVKSSKSSQLQ) are disordered.

This Homo sapiens (Human) protein is Melanoma-associated antigen B10 (MAGEB10).